The following is a 75-amino-acid chain: Tautomerase PptA (75 aa).

Proline 2 (proton acceptor; via imino nitrogen) is an active-site residue.

It belongs to the 4-oxalocrotonate tautomerase family. PptA subfamily. As to quaternary structure, homodimer.

The protein resides in the cytoplasm. The protein is Tautomerase PptA of Klebsiella pneumoniae subsp. pneumoniae (strain ATCC 700721 / MGH 78578).